The sequence spans 846 residues: MRAREKERNCQNLWKWGIMLLGMLMTCSAAEDLWVTVYYGVPIWKEATTTLFCASDAKAYKKEAHNIWATHACVPTDPNPQEIELENVTENFNMWKNNMVEQMHEDIISLWDQSLKPCVKLTPLCVTLNCTDELRNSKGNGKVEEEEKRKNCSFNVRDKREQVYALFYKLDIVPIDNNNRTNSTNYRLINCDTSTITQACPKISFEPIPIHFCAPAGFAILKCRDKKFNGTGPCSNVSTVQCTHGIRPVVSTQLLLNGSLAEEEIIIRSENLTNNVKTIIVQLNASIVINCTRPYKYTRQRTSIGLRQSLYTITGKKKKTGYIGQAHCKISRAEWNKALQQVATKLGNLLNKTTITFKPSSGGDPEITSHMLNCGGDFFYCNTSRLFNSTWNQTNSTGFNNGTVTLPCRIKQIVNLWQRVGKAMYAPPIEGLIKCSSNITGLLLTRDGGANNSSHETIRPGGGDMRDNWRSELYKYKVVKIEPIGVAPTKARRRVVEREKRAIGLGAVFLGFLGAAGSTMGAASVTLTVQARQLMSGIVHQQNNLLRAIEAQQHLLQLTVWGIKQLQARVLAVERYLRDQQLLGIWGCSGRHICTTNVPWNSSWSNRSLDEIWQNMTWMEWEREIDNYTGLIYSLIEESQIQQEKNEKELLELDKWASLWNWFSITKWLWYIKLFIMIVGGLIGLRIVFAVLSVVNRVRQGYSPLSFQTLLPVPRGPDRPEEIEEEGGERGRDRSIRLVNGLFALFWDDLRNLCLFSYHRLRDSILIAARIVELLGRRGWEALKYLWNLLQYWSQELRNSASSLLDTIAIAVAERTDRVIEVVQRACRAILNVPRRIRQGLERLLL.

A signal peptide spans 1-31 (MRAREKERNCQNLWKWGIMLLGMLMTCSAAE). Topologically, residues 32-674 (DLWVTVYYGV…ITKWLWYIKL (643 aa)) are extracellular. A disulfide bridge links Cys-53 with Cys-73. N-linked (GlcNAc...) asparagine; by host glycosylation is found at Asn-87, Asn-129, Asn-151, Asn-179, Asn-182, Asn-229, Asn-236, Asn-257, Asn-271, Asn-284, and Asn-290. 5 disulfide bridges follow: Cys-118–Cys-200, Cys-125–Cys-191, Cys-130–Cys-152, Cys-213–Cys-242, and Cys-223–Cys-234. The V1 stretch occupies residues 130–151 (CTDELRNSKGNGKVEEEEKRKN). The interval 152–191 (CSFNVRDKREQVYALFYKLDIVPIDNNNRTNSTNYRLINC) is V2. The V3 stretch occupies residues 291-327 (CTRPYKYTRQRTSIGLRQSLYTITGKKKKTGYIGQAH). A disulfide bridge links Cys-291 with Cys-328. Asn-351 carries an N-linked (GlcNAc...) asparagine; by host glycan. Residues 360 to 370 (SSGGDPEITSH) form a CD4-binding loop region. Disulfide bonds link Cys-374-Cys-435 and Cys-381-Cys-408. The tract at residues 381–408 (CNTSRLFNSTWNQTNSTGFNNGTVTLPC) is V4. N-linked (GlcNAc...) asparagine; by host glycans are attached at residues Asn-382, Asn-388, Asn-392, Asn-395, Asn-401, Asn-438, Asn-451, and Asn-452. V5 stretches follow at residues 450–461 (ANNSSHETIRPG) and 453–461 (SSHETIRPG). The fusion peptide stretch occupies residues 502 to 522 (AIGLGAVFLGFLGAAGSTMGA). The interval 564–582 (KQLQARVLAVERYLRDQQL) is immunosuppression. Cys-588 and Cys-594 are oxidised to a cystine. Residues Asn-601, Asn-606, Asn-615, and Asn-627 are each glycosylated (N-linked (GlcNAc...) asparagine; by host). A coiled-coil region spans residues 623–657 (REIDNYTGLIYSLIEESQIQQEKNEKELLELDKWA). Residues 652-673 (ELDKWASLWNWFSITKWLWYIK) are MPER; binding to GalCer. A helical membrane pass occupies residues 675 to 695 (FIMIVGGLIGLRIVFAVLSVV). The Cytoplasmic portion of the chain corresponds to 696–846 (NRVRQGYSPL…IRQGLERLLL (151 aa)). Residues 702–705 (YSPL) carry the YXXL motif; contains endocytosis signal motif. 2 S-palmitoyl cysteine; by host lipidation sites follow: Cys-754 and Cys-827. The Di-leucine internalization motif motif lies at 845-846 (LL).

Belongs to the HIV-1 env protein family. As to quaternary structure, the mature envelope protein (Env) consists of a homotrimer of non-covalently associated gp120-gp41 heterodimers. The resulting complex protrudes from the virus surface as a spike. There seems to be as few as 10 spikes on the average virion. Interacts with host CD4, CCR5 and CXCR4. Gp120 also interacts with the C-type lectins CD209/DC-SIGN and CLEC4M/DC-SIGNR (collectively referred to as DC-SIGN(R)). Gp120 and gp41 interact with GalCer. Gp120 interacts with host ITGA4/ITGB7 complex; on CD4+ T-cells, this interaction results in rapid activation of integrin ITGAL/LFA-1, which facilitates efficient cell-to-cell spreading of HIV-1. Gp120 interacts with cell-associated heparan sulfate; this interaction increases virus infectivity on permissive cells and may be involved in infection of CD4- cells. The mature envelope protein (Env) consists of a homotrimer of non-covalently associated gp120-gp41 heterodimers. The resulting complex protrudes from the virus surface as a spike. There seems to be as few as 10 spikes on the average virion. In terms of processing, highly glycosylated by host. The high number of glycan on the protein is reffered to as 'glycan shield' because it contributes to hide protein sequence from adaptive immune system. Palmitoylation of the transmembrane protein and of Env polyprotein (prior to its proteolytic cleavage) is essential for their association with host cell membrane lipid rafts. Palmitoylation is therefore required for envelope trafficking to classical lipid rafts, but not for viral replication. Post-translationally, specific enzymatic cleavages in vivo yield mature proteins. Envelope glycoproteins are synthesized as an inactive precursor that is heavily N-glycosylated and processed likely by host cell furin in the Golgi to yield the mature SU and TM proteins. The cleavage site between SU and TM requires the minimal sequence [KR]-X-[KR]-R. About 2 of the 9 disulfide bonds of gp41 are reduced by P4HB/PDI, following binding to CD4 receptor.

The protein localises to the virion membrane. It is found in the host cell membrane. The protein resides in the host endosome membrane. In terms of biological role, oligomerizes in the host endoplasmic reticulum into predominantly trimers. In a second time, gp160 transits in the host Golgi, where glycosylation is completed. The precursor is then proteolytically cleaved in the trans-Golgi and thereby activated by cellular furin or furin-like proteases to produce gp120 and gp41. Its function is as follows. Attaches the virus to the host lymphoid cell by binding to the primary receptor CD4. This interaction induces a structural rearrangement creating a high affinity binding site for a chemokine coreceptor like CXCR4 and/or CCR5. Acts as a ligand for CD209/DC-SIGN and CLEC4M/DC-SIGNR, which are respectively found on dendritic cells (DCs), and on endothelial cells of liver sinusoids and lymph node sinuses. These interactions allow capture of viral particles at mucosal surfaces by these cells and subsequent transmission to permissive cells. HIV subverts the migration properties of dendritic cells to gain access to CD4+ T-cells in lymph nodes. Virus transmission to permissive T-cells occurs either in trans (without DCs infection, through viral capture and transmission), or in cis (following DCs productive infection, through the usual CD4-gp120 interaction), thereby inducing a robust infection. In trans infection, bound virions remain infectious over days and it is proposed that they are not degraded, but protected in non-lysosomal acidic organelles within the DCs close to the cell membrane thus contributing to the viral infectious potential during DCs' migration from the periphery to the lymphoid tissues. On arrival at lymphoid tissues, intact virions recycle back to DCs' cell surface allowing virus transmission to CD4+ T-cells. Acts as a class I viral fusion protein. Under the current model, the protein has at least 3 conformational states: pre-fusion native state, pre-hairpin intermediate state, and post-fusion hairpin state. During fusion of viral and target intracellular membranes, the coiled coil regions (heptad repeats) assume a trimer-of-hairpins structure, positioning the fusion peptide in close proximity to the C-terminal region of the ectodomain. The formation of this structure appears to drive apposition and subsequent fusion of viral and target cell membranes. Complete fusion occurs in host cell endosomes and is dynamin-dependent, however some lipid transfer might occur at the plasma membrane. The virus undergoes clathrin-dependent internalization long before endosomal fusion, thus minimizing the surface exposure of conserved viral epitopes during fusion and reducing the efficacy of inhibitors targeting these epitopes. Membranes fusion leads to delivery of the nucleocapsid into the cytoplasm. This chain is Envelope glycoprotein gp160, found in Human immunodeficiency virus type 1 group M subtype D (isolate NDK) (HIV-1).